The primary structure comprises 721 residues: Choline O-acetyltransferase (721 aa).

The Proton acceptor role is filled by His419. Residues 496–508, Ser534, and Gln656 contribute to the CoA site; that span reads GKTF…VSPD.

This sequence belongs to the carnitine/choline acetyltransferase family. In terms of assembly, the 54 kDa and 13 kDa chains exist as a heterodimer. The N-terminus of choline O-acetyltransferase 67 kDa and 54 kDa chains are blocked.

The catalysed reaction is choline + acetyl-CoA = acetylcholine + CoA. Its function is as follows. Catalyzes the reversible synthesis of acetylcholine (ACh) from acetyl CoA and choline at cholinergic synapses. In Drosophila melanogaster (Fruit fly), this protein is Choline O-acetyltransferase.